A 224-amino-acid chain; its full sequence is Urease accessory protein UreF (224 aa).

It belongs to the UreF family. As to quaternary structure, ureD, UreF and UreG form a complex that acts as a GTP-hydrolysis-dependent molecular chaperone, activating the urease apoprotein by helping to assemble the nickel containing metallocenter of UreC. The UreE protein probably delivers the nickel.

The protein resides in the cytoplasm. In terms of biological role, required for maturation of urease via the functional incorporation of the urease nickel metallocenter. This is Urease accessory protein UreF from Klebsiella pneumoniae (strain 342).